Here is a 160-residue protein sequence, read N- to C-terminus: Large ribosomal subunit protein uL22c (160 aa).

It belongs to the universal ribosomal protein uL22 family. In terms of assembly, part of the 50S ribosomal subunit.

The protein localises to the plastid. Its subcellular location is the chloroplast. Its function is as follows. This protein binds specifically to 23S rRNA. In terms of biological role, the globular domain of the protein is located near the polypeptide exit tunnel on the outside of the subunit, while an extended beta-hairpin is found that lines the wall of the exit tunnel in the center of the 70S ribosome. The protein is Large ribosomal subunit protein uL22c (rpl22) of Eucalyptus globulus subsp. globulus (Tasmanian blue gum).